The chain runs to 1162 residues: Isoleucine--tRNA ligase (1162 aa).

Residues 50–60 (PSANGMPGIHH) carry the 'HIGH' region motif. The 'KMSKS' region motif lies at 710–714 (KMSKR). Lys-713 is an ATP binding site.

Belongs to the class-I aminoacyl-tRNA synthetase family. IleS type 2 subfamily. In terms of assembly, monomer. Zn(2+) is required as a cofactor.

It localises to the cytoplasm. It catalyses the reaction tRNA(Ile) + L-isoleucine + ATP = L-isoleucyl-tRNA(Ile) + AMP + diphosphate. Its function is as follows. Catalyzes the attachment of isoleucine to tRNA(Ile). As IleRS can inadvertently accommodate and process structurally similar amino acids such as valine, to avoid such errors it has two additional distinct tRNA(Ile)-dependent editing activities. One activity is designated as 'pretransfer' editing and involves the hydrolysis of activated Val-AMP. The other activity is designated 'posttransfer' editing and involves deacylation of mischarged Val-tRNA(Ile). In Bacteroides thetaiotaomicron (strain ATCC 29148 / DSM 2079 / JCM 5827 / CCUG 10774 / NCTC 10582 / VPI-5482 / E50), this protein is Isoleucine--tRNA ligase.